An 89-amino-acid polypeptide reads, in one-letter code: Large ribosomal subunit protein bL27 (89 aa).

The segment at 1–21 is disordered; that stretch reads MAHKKAGGSSRNGRDSKGKRL.

Belongs to the bacterial ribosomal protein bL27 family.

This chain is Large ribosomal subunit protein bL27, found in Bradyrhizobium sp. (strain ORS 278).